Here is a 150-residue protein sequence, read N- to C-terminus: uncharacterized protein (150 aa).

One can recognise a Flavodoxin-like domain in the interval 4 to 148 (LILYKSIHHK…KAKEFAKSIL (145 aa)).

This is an uncharacterized protein from Methanocaldococcus jannaschii (strain ATCC 43067 / DSM 2661 / JAL-1 / JCM 10045 / NBRC 100440) (Methanococcus jannaschii).